A 190-amino-acid polypeptide reads, in one-letter code: Potassium-transporting ATPase KdpC subunit (190 aa).

A helical membrane pass occupies residues 13-33 (VGFLLLTLMCGVVYPGIVTIF).

This sequence belongs to the KdpC family. In terms of assembly, the system is composed of three essential subunits: KdpA, KdpB and KdpC.

It is found in the cell membrane. Its function is as follows. Part of the high-affinity ATP-driven potassium transport (or Kdp) system, which catalyzes the hydrolysis of ATP coupled with the electrogenic transport of potassium into the cytoplasm. This subunit acts as a catalytic chaperone that increases the ATP-binding affinity of the ATP-hydrolyzing subunit KdpB by the formation of a transient KdpB/KdpC/ATP ternary complex. This Listeria monocytogenes serotype 4a (strain HCC23) protein is Potassium-transporting ATPase KdpC subunit.